A 320-amino-acid polypeptide reads, in one-letter code: Beta-sarcoglycan (320 aa).

The segment covering Met-1–Ala-10 has biased composition (low complexity). A disordered region spans residues Met-1 to Val-34. Residues Met-1–Ala-67 lie on the Cytoplasmic side of the membrane. Residues Ser-23 to Val-34 show a composition bias toward basic and acidic residues. Residues Ile-68–Ile-88 traverse the membrane as a helical; Signal-anchor for type II membrane protein segment. Residues Trp-89 to His-320 are Extracellular-facing. 3 N-linked (GlcNAc...) asparagine glycosylation sites follow: Asn-160, Asn-213, and Asn-260. 2 cysteine pairs are disulfide-bonded: Cys-290–Cys-316 and Cys-292–Cys-309.

Belongs to the sarcoglycan beta/delta/gamma/zeta family. In terms of assembly, cross-link to form 2 major subcomplexes: one consisting of SGCB, SGCD and SGCG and the other consisting of SGCB and SGCD. The association between SGCB and SGCG is particularly strong while SGCA is loosely associated with the other sarcoglycans. Disulfide bonds are present.

Its subcellular location is the cell membrane. It is found in the sarcolemma. It localises to the cytoplasm. The protein localises to the cytoskeleton. Component of the sarcoglycan complex, a subcomplex of the dystrophin-glycoprotein complex which forms a link between the F-actin cytoskeleton and the extracellular matrix. The polypeptide is Beta-sarcoglycan (SGCB) (Mesocricetus auratus (Golden hamster)).